The chain runs to 143 residues: Large ribosomal subunit protein uL11 (143 aa).

It belongs to the universal ribosomal protein uL11 family. As to quaternary structure, part of the ribosomal stalk of the 50S ribosomal subunit. Interacts with L10 and the large rRNA to form the base of the stalk. L10 forms an elongated spine to which L12 dimers bind in a sequential fashion forming a multimeric L10(L12)X complex. In terms of processing, one or more lysine residues are methylated.

Functionally, forms part of the ribosomal stalk which helps the ribosome interact with GTP-bound translation factors. The polypeptide is Large ribosomal subunit protein uL11 (Saccharophagus degradans (strain 2-40 / ATCC 43961 / DSM 17024)).